Consider the following 886-residue polypeptide: Isoleucine--tRNA ligase (886 aa).

The short motif at 60–70 (PYANGDIHIGH) is the 'HIGH' region element. Residue Glu546 coordinates L-isoleucyl-5'-AMP. The 'KMSKS' region signature appears at 587 to 591 (KMSKS). Lys590 provides a ligand contact to ATP. The Zn(2+) site is built by Cys856, Cys859, Cys870, and Cys873.

Belongs to the class-I aminoacyl-tRNA synthetase family. IleS type 1 subfamily. In terms of assembly, monomer. It depends on Zn(2+) as a cofactor.

Its subcellular location is the cytoplasm. It carries out the reaction tRNA(Ile) + L-isoleucine + ATP = L-isoleucyl-tRNA(Ile) + AMP + diphosphate. Its function is as follows. Catalyzes the attachment of isoleucine to tRNA(Ile). As IleRS can inadvertently accommodate and process structurally similar amino acids such as valine, to avoid such errors it has two additional distinct tRNA(Ile)-dependent editing activities. One activity is designated as 'pretransfer' editing and involves the hydrolysis of activated Val-AMP. The other activity is designated 'posttransfer' editing and involves deacylation of mischarged Val-tRNA(Ile). This Mesomycoplasma hyopneumoniae (strain J / ATCC 25934 / NCTC 10110) (Mycoplasma hyopneumoniae) protein is Isoleucine--tRNA ligase.